The primary structure comprises 347 residues: Microfibril-associated glycoprotein 3 (347 aa).

The first 22 residues, Met-1 to Leu-22, serve as a signal peptide directing secretion. The Extracellular portion of the chain corresponds to Glu-23–Asp-139. N-linked (GlcNAc...) asparagine glycans are attached at residues Asn-31, Asn-36, Asn-63, and Asn-103. Residues Ala-47–Thr-130 enclose the Ig-like C2-type domain. Residues Cys-68 and Cys-117 are joined by a disulfide bond. A helical transmembrane segment spans residues Met-140 to Val-160. Over Thr-161–Glu-347 the chain is Cytoplasmic. Residues Asn-280 to Glu-347 form a disordered region. Positions Val-311–Ser-331 are enriched in polar residues.

In terms of processing, glycosylated.

It localises to the cell membrane. Functionally, component of the elastin-associated microfibrils. In Rattus norvegicus (Rat), this protein is Microfibril-associated glycoprotein 3 (Mfap3).